Here is a 103-residue protein sequence, read N- to C-terminus: Integration host factor subunit beta (103 aa).

This sequence belongs to the bacterial histone-like protein family. In terms of assembly, heterodimer of an alpha and a beta chain.

In terms of biological role, this protein is one of the two subunits of integration host factor, a specific DNA-binding protein that functions in genetic recombination as well as in transcriptional and translational control. This is Integration host factor subunit beta from Bradyrhizobium sp. (strain BTAi1 / ATCC BAA-1182).